A 410-amino-acid polypeptide reads, in one-letter code: Formyl-CoA:oxalate CoA-transferase (410 aa).

CoA is bound by residues Gln18–Ser19, Leu72–Lys75, Asn96–Gly98, Arg104, and Lys136–Glu139. Asp168 (nucleophile) is an active-site residue. The tract at residues Pro221–Gln245 is disordered. Substrate is bound at residue Gly243 to Gln245.

This sequence belongs to the CoA-transferase III family. Frc subfamily. Homodimer.

It catalyses the reaction formyl-CoA + oxalate = oxalyl-CoA + formate. It functions in the pathway metabolic intermediate degradation; oxalate degradation; CO(2) and formate from oxalate: step 1/2. Functionally, involved in the catabolism of oxalate and in the adapatation to low pH via the induction of the oxalate-dependent acid tolerance response (ATR). Catalyzes the transfer of the CoA moiety from formyl-CoA to oxalate. The sequence is that of Formyl-CoA:oxalate CoA-transferase from Streptomyces coelicolor (strain ATCC BAA-471 / A3(2) / M145).